The sequence spans 339 residues: Glycerol-3-phosphate dehydrogenase [NAD(P)+] (339 aa).

Residues Ser15, Tyr16, His36, and Lys110 each coordinate NADPH. Residues Lys110, Gly139, and Thr141 each coordinate sn-glycerol 3-phosphate. Ala143 contributes to the NADPH binding site. Sn-glycerol 3-phosphate contacts are provided by Lys195, Asp248, Ser258, Arg259, and Asn260. The Proton acceptor role is filled by Lys195. Arg259 contacts NADPH. The NADPH site is built by Val283 and Glu285.

The protein belongs to the NAD-dependent glycerol-3-phosphate dehydrogenase family.

The protein resides in the cytoplasm. It carries out the reaction sn-glycerol 3-phosphate + NAD(+) = dihydroxyacetone phosphate + NADH + H(+). The enzyme catalyses sn-glycerol 3-phosphate + NADP(+) = dihydroxyacetone phosphate + NADPH + H(+). The protein operates within membrane lipid metabolism; glycerophospholipid metabolism. Its function is as follows. Catalyzes the reduction of the glycolytic intermediate dihydroxyacetone phosphate (DHAP) to sn-glycerol 3-phosphate (G3P), the key precursor for phospholipid synthesis. The protein is Glycerol-3-phosphate dehydrogenase [NAD(P)+] of Klebsiella pneumoniae (strain 342).